A 154-amino-acid polypeptide reads, in one-letter code: 3-hydroxyacyl-[acyl-carrier-protein] dehydratase FabZ (154 aa).

Histidine 54 is an active-site residue.

This sequence belongs to the thioester dehydratase family. FabZ subfamily.

Its subcellular location is the cytoplasm. It carries out the reaction a (3R)-hydroxyacyl-[ACP] = a (2E)-enoyl-[ACP] + H2O. Its function is as follows. Involved in unsaturated fatty acids biosynthesis. Catalyzes the dehydration of short chain beta-hydroxyacyl-ACPs and long chain saturated and unsaturated beta-hydroxyacyl-ACPs. The sequence is that of 3-hydroxyacyl-[acyl-carrier-protein] dehydratase FabZ from Shewanella sp. (strain MR-4).